The primary structure comprises 186 residues: NADH-quinone oxidoreductase subunit B (186 aa).

Residues cysteine 44, cysteine 45, cysteine 110, and cysteine 139 each coordinate [4Fe-4S] cluster.

This sequence belongs to the complex I 20 kDa subunit family. As to quaternary structure, NDH-1 is composed of 14 different subunits. Subunits NuoB, C, D, E, F, and G constitute the peripheral sector of the complex. The cofactor is [4Fe-4S] cluster.

The protein resides in the cell inner membrane. The enzyme catalyses a quinone + NADH + 5 H(+)(in) = a quinol + NAD(+) + 4 H(+)(out). Its function is as follows. NDH-1 shuttles electrons from NADH, via FMN and iron-sulfur (Fe-S) centers, to quinones in the respiratory chain. The immediate electron acceptor for the enzyme in this species is believed to be ubiquinone. Couples the redox reaction to proton translocation (for every two electrons transferred, four hydrogen ions are translocated across the cytoplasmic membrane), and thus conserves the redox energy in a proton gradient. This is NADH-quinone oxidoreductase subunit B from Leptospira biflexa serovar Patoc (strain Patoc 1 / Ames).